The sequence spans 182 residues: MPLSLRLAPSPTALSPTTGGFSPAKKQCRIPSYSGVATTTRRIGLCSLDYVKRGDSSVVRCSLQTVNVSVGQVTEVDKDTFWPIVKAAGEKIVVLDMYTQWCGPCKVIAPKYKALSEKYEDVVFLKLDCNPENRPLAKELGIRVVPTFKILKDNQVVKEVTGAKYDDLVAAIETARSASSSG.

The segment at 1 to 22 (MPLSLRLAPSPTALSPTTGGFS) is disordered. The region spanning 52–177 (KRGDSSVVRC…LVAAIETARS (126 aa)) is the Thioredoxin domain. Catalysis depends on nucleophile residues Cys102 and Cys105. An intrachain disulfide couples Cys102 to Cys105.

The protein belongs to the thioredoxin family. Plant F-type subfamily. In terms of assembly, forms a complex with heterodimeric ferredoxin-thioredoxin reductase (FTR) and ferredoxin.

The protein localises to the plastid. It localises to the chloroplast. In terms of biological role, participates in various redox reactions through the reversible oxidation of the active center dithiol to a disulfide. The F form is known to activate a number of enzymes of the photosynthetic carbon cycle. The protein is Thioredoxin F-type, chloroplastic (TRXF) of Brassica napus (Rape).